The primary structure comprises 420 residues: Pre-mRNA-splicing factor RBM22 (420 aa).

Residue Ala2 is modified to N-acetylalanine. 2 positions are modified to phosphoserine: Ser4 and Ser102. Glycyl lysine isopeptide (Lys-Gly) (interchain with G-Cter in SUMO2) cross-links involve residues Lys139 and Lys149. Residues 159–186 form a C3H1-type zinc finger; sequence RNRPHICSFWVKGECKRGEECPYRHEKP. Position 212 is an N6-acetyllysine (Lys212). An RRM domain is found at 232 to 305; the sequence is TTLYVGGLGD…RRLNVKWGRS (74 aa). Lys290 participates in a covalent cross-link: Glycyl lysine isopeptide (Lys-Gly) (interchain with G-Cter in SUMO2). Disordered regions lie at residues 303–343 and 372–420; these read GRSQ…AAEE and APPP…HSSP. Basic and acidic residues predominate over residues 309–318; that stretch reads RGKEKEKDGT.

This sequence belongs to the SLT11 family. As to quaternary structure, component of the pre-catalytic and catalytic spliceosome complexes. Component of the postcatalytic spliceosome P complex. Interacts with PDCD6; the interaction induces translocation of PDCD6 in the cytoplasm. Interacts with PPIL1.

The protein resides in the nucleus. It is found in the cytoplasm. Its function is as follows. Required for pre-mRNA splicing as component of the activated spliceosome. Involved in the first step of pre-mRNA splicing. Binds directly to the internal stem-loop (ISL) domain of the U6 snRNA and to the pre-mRNA intron near the 5' splice site during the activation and catalytic phases of the spliceosome cycle. Involved in both translocations of the nuclear SLU7 to the cytoplasm and the cytosolic calcium-binding protein PDCD6 to the nucleus upon cellular stress responses. The chain is Pre-mRNA-splicing factor RBM22 (RBM22) from Homo sapiens (Human).